The following is a 228-amino-acid chain: MQFITVALTLIALASASPIATNVEKPSELEARQLNSVRNDLISGNAAACPSVILIFARASGEVGNMGLSAGTNVASALEREFRNDIWVQGVGDPYDAALSPNFLPAGTTQGAIDEAKRMFTLANTKCPNAAVVAGGYSQGTAVMFNAVSEMPAAVQDQIKGVVLFGYTKNLQNRGRIPDFPTEKTEVYCNASDAVCFGTLFLLPAHFLYTTESSIAAPNWLIRQIRAA.

A signal peptide spans 1-16; sequence MQFITVALTLIALASA. The cysteines at positions 49 and 127 are disulfide-linked. Ser138 acts as the Nucleophile in catalysis. An intrachain disulfide couples Cys189 to Cys196. A glycan (N-linked (GlcNAc...) asparagine) is linked at Asn190. Residue Asp193 is part of the active site. His206 acts as the Proton donor/acceptor in catalysis.

It belongs to the cutinase family. In terms of processing, the 2 disulfide bonds play a critical role in holding the catalytic residues in juxta-position; reduction of the disulfide bridges results in the complete inactivation of the enzyme.

It localises to the secreted. The catalysed reaction is cutin + H2O = cutin monomers.. In terms of biological role, catalyzes the hydrolysis of complex carboxylic polyesters found in the cell wall of plants. Degrades cutin, a macromolecule that forms the structure of the plant cuticle. Required for efficient penetration of the host plant cuticle by the appressorium during the initial stage of fungal infection. This Pyricularia oryzae (strain 70-15 / ATCC MYA-4617 / FGSC 8958) (Rice blast fungus) protein is Cutinase CUT1.